We begin with the raw amino-acid sequence, 290 residues long: Glycine--tRNA ligase alpha subunit (290 aa).

It belongs to the class-II aminoacyl-tRNA synthetase family. As to quaternary structure, tetramer of two alpha and two beta subunits.

The protein resides in the cytoplasm. It catalyses the reaction tRNA(Gly) + glycine + ATP = glycyl-tRNA(Gly) + AMP + diphosphate. The sequence is that of Glycine--tRNA ligase alpha subunit from Prochlorococcus marinus (strain NATL2A).